The primary structure comprises 35 residues: Mu-theraphotoxin-Ca2a (35 aa).

3 disulfide bridges follow: Cys2-Cys17, Cys9-Cys24, and Cys16-Cys31.

This sequence belongs to the neurotoxin 10 (Hwtx-1) family. 10 (haplotoxin-1) subfamily. Expressed by the venom gland.

It localises to the secreted. In terms of biological role, potently inhibits Nav1.7/SCN9A (IC(50)=98.1 nM), and moderately inhibits Nav1.2/SCN2A (IC(50)=216.3 nM), Nav1.6/SCN8A (IC(50)=313.6 nM), and Nav1.3/SCN3A (IC(50)=491.3 nM). Hyperpolarizes the slow inactivation, but does not alter the voltage-dependent activation or fast inactivation of Nav1.7/SCN9A. Binds with Nav1.7/SCN9A at the extracellular S3-S4 linker of domain II (site 4). In vivo, exhibits dose-dependent analgesic efficacy by reducing pain responses in rodent models of formalin-induced paw licking, hot plate test, and acetic acid-induced writhing. This Cyriopagopus albostriatus (Cambodian tiger tarantula) protein is Mu-theraphotoxin-Ca2a.